Consider the following 59-residue polypeptide: UPF0509 protein KPK_3153 (59 aa).

The protein belongs to the UPF0509 family.

This Klebsiella pneumoniae (strain 342) protein is UPF0509 protein KPK_3153.